Reading from the N-terminus, the 325-residue chain is Glutarate 2-hydroxylase (325 aa).

Fe cation contacts are provided by histidine 160, aspartate 162, and histidine 292.

Belongs to the glutarate hydroxylase family. In terms of assembly, homotetramer. It depends on Fe(2+) as a cofactor.

It catalyses the reaction glutarate + 2-oxoglutarate + O2 = (S)-2-hydroxyglutarate + succinate + CO2. It participates in amino-acid degradation. Functionally, acts as an alpha-ketoglutarate-dependent dioxygenase catalyzing hydroxylation of glutarate (GA) to L-2-hydroxyglutarate (L2HG). Functions in a L-lysine degradation pathway that proceeds via cadaverine, glutarate and L-2-hydroxyglutarate. The protein is Glutarate 2-hydroxylase of Escherichia coli O127:H6 (strain E2348/69 / EPEC).